We begin with the raw amino-acid sequence, 184 residues long: Photosystem I assembly protein Ycf4 (184 aa).

The next 2 membrane-spanning stretches (helical) occupy residues 22-42 (VCWA…GTSS) and 57-77 (IIFF…LFIS).

This sequence belongs to the Ycf4 family.

It is found in the plastid. The protein localises to the chloroplast thylakoid membrane. Its function is as follows. Seems to be required for the assembly of the photosystem I complex. In Morus indica (Mulberry), this protein is Photosystem I assembly protein Ycf4.